Consider the following 213-residue polypeptide: Kynurenine formamidase (213 aa).

Trp18 contributes to the substrate binding site. Zn(2+)-binding residues include His48, His52, and Asp54. The active-site Proton donor/acceptor is His58. Positions 160 and 172 each coordinate Zn(2+).

It belongs to the Cyclase 1 superfamily. KynB family. In terms of assembly, homodimer. Requires Zn(2+) as cofactor.

The enzyme catalyses N-formyl-L-kynurenine + H2O = L-kynurenine + formate + H(+). Its pathway is amino-acid degradation; L-tryptophan degradation via kynurenine pathway; L-kynurenine from L-tryptophan: step 2/2. In terms of biological role, catalyzes the hydrolysis of N-formyl-L-kynurenine to L-kynurenine, the second step in the kynurenine pathway of tryptophan degradation. In Burkholderia thailandensis (strain ATCC 700388 / DSM 13276 / CCUG 48851 / CIP 106301 / E264), this protein is Kynurenine formamidase.